The chain runs to 279 residues: 2-dehydropantoate 2-reductase (279 aa).

NADP(+) contacts are provided by residues 6-11 (GLGAVG), K66, and N86. K158 serves as the catalytic Proton donor. Substrate is bound by residues K158, N162, N166, N176, and 225–228 (NLSS). E240 lines the NADP(+) pocket.

The protein belongs to the ketopantoate reductase family.

It is found in the cytoplasm. The enzyme catalyses (R)-pantoate + NAD(+) = 2-dehydropantoate + NADH + H(+). It carries out the reaction (R)-pantoate + NADP(+) = 2-dehydropantoate + NADPH + H(+). Its pathway is cofactor biosynthesis; coenzyme A biosynthesis. Functionally, catalyzes the NAD(P)H-dependent reduction of ketopantoate into pantoic acid. The protein is 2-dehydropantoate 2-reductase of Pyrobaculum aerophilum (strain ATCC 51768 / DSM 7523 / JCM 9630 / CIP 104966 / NBRC 100827 / IM2).